Consider the following 491-residue polypeptide: Cytochrome P450 2B9 (491 aa).

Ser-128 carries the phosphoserine; by PKA modification. Cys-436 provides a ligand contact to heme.

It belongs to the cytochrome P450 family. It depends on heme as a cofactor.

It localises to the endoplasmic reticulum membrane. The protein localises to the microsome membrane. It carries out the reaction an organic molecule + reduced [NADPH--hemoprotein reductase] + O2 = an alcohol + oxidized [NADPH--hemoprotein reductase] + H2O + H(+). Its function is as follows. Cytochromes P450 are a group of heme-thiolate monooxygenases. In liver microsomes, this enzyme is involved in an NADPH-dependent electron transport pathway. It oxidizes a variety of structurally unrelated compounds, including steroids, fatty acids, and xenobiotics. The polypeptide is Cytochrome P450 2B9 (Cyp2b9) (Mus musculus (Mouse)).